We begin with the raw amino-acid sequence, 1669 residues long: Collagen alpha-1(IV) chain (1669 aa).

Residues 1 to 27 form the signal peptide; that stretch reads MGPRLSVWLLLLPAALLLHEEHSRAAA. The propeptide at 28–172 is N-terminal propeptide (7S domain); it reads KGGCAGSGCG…LGHVPGMLLK (145 aa). 3 disordered regions span residues 48 to 459, 504 to 1382, and 1404 to 1431; these read KGER…EIGE, GRDG…PKGQ, and PGQK…DGLP. The N-linked (GlcNAc...) asparagine glycan is linked to asparagine 126. Residues 173 to 1440 form a triple-helical region region; that stretch reads GERGFPGIPG…PGSMGPPGTP (1268 aa). Positions 196–214 are enriched in pro residues; it reads VGPPGFTGPPGPPGPPGPP. Proline 204, proline 207, and proline 210 each carry 3-hydroxyproline. Low complexity predominate over residues 234-249; sequence QGVSGPPGVPGQAQVQ. Composition is skewed to basic and acidic residues over residues 250–263 and 289–298; these read EKGD…KGQK and PGKDGDKGEK. 3 stretches are compositionally biased toward pro residues: residues 367 to 376, 413 to 424, and 436 to 448; these read PGQPGPPGLP, PGPPGSPGPPGQ, and PGPP…PGIP. Residues 535–545 are compositionally biased toward basic and acidic residues; it reads FDLRLKGDKGD. Gly residues predominate over residues 586 to 595; the sequence is GPPGGVGFPG. A 3-hydroxyproline mark is found at proline 587 and proline 602. Residue proline 603 is modified to 4-hydroxyproline. Position 605 is a 3-hydroxyproline (proline 605). Proline 606 carries the 4-hydroxyproline modification. Residues 611–620 show a composition bias toward low complexity; the sequence is AGPIGDKGQA. A compositionally biased stretch (gly residues) spans 621-630; that stretch reads GFPGGPGSPG. Proline 623, proline 626, proline 629, and proline 632 each carry 4-hydroxyproline. Proline 647 carries the 3-hydroxyproline modification. The span at 797 to 817 shows a compositional bias: gly residues; it reads GVPGIGPPGARGPPGGQGPPG. Low complexity-rich tracts occupy residues 856–875 and 977–986; these read QSGL…PGFP and PGKDGQAGQP. Over residues 1011–1020 the composition is skewed to gly residues; that stretch reads GSVGGMGLPG. Low complexity predominate over residues 1086–1114; it reads SIGIPGMPGSPGLKGSPGSVGYPGSPGLP. Proline 1214 carries the 3-hydroxyproline modification. The span at 1247–1258 shows a compositional bias: pro residues; it reads PGLPGPMGPPGL. The span at 1290-1299 shows a compositional bias: gly residues; the sequence is GMPGIGGSPG. Residues 1368–1382 are compositionally biased toward low complexity; that stretch reads PGLKGLQGLPGPKGQ. A 3-hydroxyproline modification is found at proline 1424. One can recognise a Collagen IV NC1 domain in the interval 1445–1669; that stretch reads GFLVTRHSQT…SRCQVCMRRT (225 aa). 6 disulfide bridges follow: cysteine 1460–cysteine 1551, cysteine 1493–cysteine 1548, cysteine 1505–cysteine 1511, cysteine 1570–cysteine 1665, cysteine 1604–cysteine 1662, and cysteine 1616–cysteine 1622. An S-Lysyl-methionine sulfilimine (Met-Lys) (interchain with K-1651) cross-link involves residue methionine 1533. Residue lysine 1651 forms an S-Lysyl-methionine sulfilimine (Lys-Met) (interchain with M-1533) linkage.

The protein belongs to the type IV collagen family. In terms of assembly, there are six type IV collagen isoforms, alpha 1(IV)-alpha 6(IV), each of which can form a triple helix structure with 2 other chains to generate type IV collagen network. Interacts with EFEMP2. Post-translationally, lysines at the third position of the tripeptide repeating unit (G-X-Y) are hydroxylated. The modified lysines can be O-glycosylated. Contains 4-hydroxyproline. Prolines at the third position of the tripeptide repeating unit (G-X-Y) are hydroxylated in some or all of the chains. In terms of processing, contains 3-hydroxyproline. This modification occurs on the first proline residue in the sequence motif Gly-Pro-Hyp, where Hyp is 4-hydroxyproline. Post-translationally, type IV collagens contain numerous cysteine residues which are involved in inter- and intramolecular disulfide bonding. 12 of these, located in the NC1 domain, are conserved in all known type IV collagens. The trimeric structure of the NC1 domains is stabilized by covalent bonds (sulfilimine cross-links) between Lys and Met residues. These cross-links are important for the mechanical stability of the basement membrane. Sulfilimine cross-link is catalyzed by PXDN. In terms of processing, proteolytic processing produces the C-terminal NC1 peptide, arresten. Highly expressed in placenta.

Its subcellular location is the secreted. It localises to the extracellular space. The protein resides in the extracellular matrix. It is found in the basement membrane. Its function is as follows. Type IV collagen is the major structural component of glomerular basement membranes (GBM), forming a 'chicken-wire' meshwork together with laminins, proteoglycans and entactin/nidogen. In terms of biological role, arresten, comprising the C-terminal NC1 domain, inhibits angiogenesis and tumor formation. The C-terminal half is found to possess the anti-angiogenic activity. Specifically inhibits endothelial cell proliferation, migration and tube formation. This Homo sapiens (Human) protein is Collagen alpha-1(IV) chain.